A 520-amino-acid chain; its full sequence is Developmental regulatory protein wetA (520 aa).

3 stretches are compositionally biased toward polar residues: residues 109-118, 155-165, and 378-392; these read TATHALSISP, QSFSPSLMRSS, and SSQKFDTSYTSSQVH. Disordered regions lie at residues 109–165, 378–454, and 468–496; these read TATH…MRSS, SSQK…SNKS, and KKILTGVAPSGSSKTKARREQEARDRRRK. Over residues 420-429 the composition is skewed to basic residues; it reads PTHRRTHSRK. Residues 445–454 are compositionally biased toward low complexity; the sequence is SSSSRGSNKS.

This sequence belongs to the wetA family.

BrlA, abaA and wetA are pivotal regulators of conidiophore development and conidium maturation. They act individually and together to regulate their own expression and that of numerous other sporulation-specific genes. This chain is Developmental regulatory protein wetA, found in Penicillium roqueforti (strain FM164).